Reading from the N-terminus, the 503-residue chain is 5'-3' exonuclease PLD4 (503 aa).

Residues 1–36 (MDKKKEHPEMRIPLQTAVEVSDWPCSTSHDPHSGLG) are Cytoplasmic-facing. A signal-anchor for type II membrane protein membrane pass occupies residues 37–57 (MVLGMLAVLGLSSVTLILFLW). Over 58 to 503 (QGATSFTSHR…RQVPSQDCVW (446 aa)) the chain is Lumenal. N-linked (GlcNAc...) asparagine glycosylation is found at asparagine 89, asparagine 148, and asparagine 169. Cysteine 92 and cysteine 248 form a disulfide bridge. The 28-residue stretch at 207–234 (TGGVLHSKFWVVDGRHIYVGSANMDWRS) folds into the PLD phosphodiesterase 1 domain. Active-site residues include histidine 212, lysine 214, and aspartate 219. Residue histidine 212 is the Proton donor of the active site. N-linked (GlcNAc...) asparagine glycosylation is found at asparagine 247, asparagine 279, asparagine 415, and asparagine 425. Residues cysteine 377 and cysteine 501 are joined by a disulfide bond. The region spanning 421–447 (FSRVNHSKFMVTDKTAYVGTSNWSEDY) is the PLD phosphodiesterase 2 domain. Active-site residues include histidine 426, lysine 428, and aspartate 433. The active-site Nucleophile is the histidine 426. N-linked (GlcNAc...) asparagine glycosylation is present at asparagine 442.

This sequence belongs to the phospholipase D family. In terms of processing, highly N-glycosylated. In terms of tissue distribution, enriched in the white matter of early postnatal brains, as well as in splenic marginal zone cells. Highly expressed in dendritic cells (DCs) and other myeloid cells, with lower expression in B cell.

It localises to the endoplasmic reticulum membrane. The protein localises to the golgi apparatus. Its subcellular location is the trans-Golgi network membrane. It is found in the nucleus. The protein resides in the early endosome. It localises to the cytoplasmic vesicle. The protein localises to the phagosome. Its subcellular location is the lysosome. It carries out the reaction Exonucleolytic cleavage in the 5'- to 3'-direction to yield nucleoside 3'-phosphates.. The enzyme catalyses a 5'-end 5'-dephospho-ribonucleotidyl-ribonucleotide-RNA + H2O = a ribonucleoside 3'-phosphate + a 5'-end dephospho-ribonucleoside-RNA + H(+). The catalysed reaction is a ribonucleoside 3'-phosphate-2'-3'-cyclophospho-GMP + H2O = a ribonucleoside 3'-phosphate + 2',3'-cyclophospho-GMP + H(+). It catalyses the reaction a 5'-end 5'-dephospho-2'-deoxyribonucleotidyl-2'-deoxyribonucleotide in single-stranded DNA + H2O = a 5'-end dephospho-2'-deoxyribonucleoside in single-stranded DNA + a 2'-deoxyribonucleoside 3'-phosphate + H(+). It carries out the reaction a 5'-end 5'-phospho-2'-deoxyribonucleotide in single-stranded DNA + H2O = a 5'-end 5'-dephospho-2'-deoxyribonucleotide in single-stranded DNA + phosphate. The enzyme catalyses a 3-lyso-sn-glycero-1-phospho-(3'-acyl-1'-sn-glycerol) + a 1-acyl-sn-glycerol = a 3-acyl-sn-glycero-1-phospho-(3'-acyl-1'-sn-glycerol) + glycerol. The catalysed reaction is 3-lyso-sn-glycero-1-phospho-(3'-(9Z-octadecenoyl)-1'-sn-glycerol) + 1-(9Z-octadecenoyl)-sn-glycerol = 3-(9Z-octadecenoyl)-sn-glycero-1-phospho-(3'-(9Z-octadecenoyl)-1'-sn-glycerol) + glycerol. Its activity is regulated as follows. The exonuclease activity toward ssDNA substrate is Ca(2+) and Mg(2+)-independent, but it is inhibited by Fe(2+), Cu(2+) and to a lesser extent Zn(2+) ions. Its function is as follows. 5'-&gt;3' exonuclease that hydrolyzes the phosphodiester bond of single-stranded DNA (ssDNA) and RNA molecules to form nucleoside 3'-monophosphates and 5'-end 5'-hydroxy deoxyribonucleotide/ribonucleotide fragments. Partially redundant with PLD4, can cleave all four nucleotides displaying higher efficiency for ssDNA and RNA fragments initiated with uridine and guanosine residues and lower efficiency for cytidine-initiated substrates. As a result, it does not always degrade polynucleotides to the single nucleotide level, it can stall at specific sites sparing certain fragments from exonucleolytic degradation. Processes self and pathogenic ssDNA and RNA molecules that reach the endolysosomal compartment via phagocytosis or autophagy and may serve as 'danger' signals for recognition by innate immune receptors such as toll-like receptors (TLRs). Degrades mitochondrial CpG-rich ssDNA fragments to prevent TLR9 activation and autoinflammatory response, but it can cleave viral RNA to generate ligands for TLR7 activation and initiate antiviral immune responses. In plasmacytoid dendritic cells, it cooperates with endonuclease RNASET2 to release 2',3'-cyclic guanosine monophosphate (2',3'-cGMP), a potent stimulatory ligand for TLR7. Produces 2',3'-cGMPs and cytidine-rich RNA fragments that occupy TLR7 ligand-binding pockets and trigger a signaling-competent state. Can exert polynucleotide phosphatase activity toward 5'-phosphorylated ssDNA substrates although at a slow rate. Transphosphatidylase that catalyzes the exchange with R to S stereo-inversion of the glycerol moiety between (S,R)-lysophosphatidylglycerol (LPG) and monoacylglycerol (MAG) substrates to yield (S,S)-bis(monoacylglycero)phosphate (BMP). Can synthesize a variety of (S,S)-BMPs representing the main phospholipid constituent of lysosomal intralumenal vesicle (ILV) membranes that bind acid hydrolases for lipid degradation. Regulates the homeostasis and interorganellar communication of the endolysosomal system with an overall impact on cellular removal of dysfunctional organelles via autophagy as well as proper protein and lipid turnover. May play a role in myotube formation in response to ER stress. The chain is 5'-3' exonuclease PLD4 from Mus musculus (Mouse).